The primary structure comprises 943 residues: Isoleucine--tRNA ligase (943 aa).

Positions 58-68 (PYANGSIHIGH) match the 'HIGH' region motif. Glu567 lines the L-isoleucyl-5'-AMP pocket. The 'KMSKS' region signature appears at 608 to 612 (KMSKS). Position 611 (Lys611) interacts with ATP. Cys906, Cys909, Cys926, and Cys929 together coordinate Zn(2+).

The protein belongs to the class-I aminoacyl-tRNA synthetase family. IleS type 1 subfamily. Monomer. Zn(2+) is required as a cofactor.

It is found in the cytoplasm. The catalysed reaction is tRNA(Ile) + L-isoleucine + ATP = L-isoleucyl-tRNA(Ile) + AMP + diphosphate. Functionally, catalyzes the attachment of isoleucine to tRNA(Ile). As IleRS can inadvertently accommodate and process structurally similar amino acids such as valine, to avoid such errors it has two additional distinct tRNA(Ile)-dependent editing activities. One activity is designated as 'pretransfer' editing and involves the hydrolysis of activated Val-AMP. The other activity is designated 'posttransfer' editing and involves deacylation of mischarged Val-tRNA(Ile). The sequence is that of Isoleucine--tRNA ligase from Pseudomonas aeruginosa (strain UCBPP-PA14).